The primary structure comprises 198 residues: Nucleoid occlusion factor SlmA (198 aa).

An HTH tetR-type domain is found at 10-70 (NRREEILQSL…SLIEFIEDSL (61 aa)). Residues 33–52 (TTAKLAASVGVSEAALYRHF) constitute a DNA-binding region (H-T-H motif). Residues 117–144 (EQDRLQGRINQLFERIEAQLRQVLREKR) adopt a coiled-coil conformation.

Belongs to the nucleoid occlusion factor SlmA family. As to quaternary structure, homodimer. Interacts with FtsZ.

Its subcellular location is the cytoplasm. The protein localises to the nucleoid. In terms of biological role, required for nucleoid occlusion (NO) phenomenon, which prevents Z-ring formation and cell division over the nucleoid. Acts as a DNA-associated cell division inhibitor that binds simultaneously chromosomal DNA and FtsZ, and disrupts the assembly of FtsZ polymers. SlmA-DNA-binding sequences (SBS) are dispersed on non-Ter regions of the chromosome, preventing FtsZ polymerization at these regions. The protein is Nucleoid occlusion factor SlmA of Salmonella agona (strain SL483).